The sequence spans 364 residues: Urease accessory protein UreD (364 aa).

2 disordered regions span residues 1 to 37 and 201 to 250; these read MDQD…SSPA and PPEV…AGER. Low complexity-rich tracts occupy residues 21–37, 209–218, and 236–248; these read AGSA…SSPA, APDRGAPAAE, and AASS…APAG.

This sequence belongs to the UreD family. As to quaternary structure, ureD, UreF and UreG form a complex that acts as a GTP-hydrolysis-dependent molecular chaperone, activating the urease apoprotein by helping to assemble the nickel containing metallocenter of UreC. The UreE protein probably delivers the nickel.

The protein resides in the cytoplasm. Functionally, required for maturation of urease via the functional incorporation of the urease nickel metallocenter. The polypeptide is Urease accessory protein UreD (Kocuria rhizophila (strain ATCC 9341 / DSM 348 / NBRC 103217 / DC2201)).